We begin with the raw amino-acid sequence, 372 residues long: MFIWQRKSILLGRSILGSGRVTVAGIIGSSRKRYTSSSSSSSSPSSKESAPVFTSKELEVARKERLDGLGPFVSRLPKKWIPYAELMRLEKPVGTWLLYLPCSWSILMGAMMQGATLSATAGMLGIFGVGALVMRGAGCTINDFLDRKLDQRVIRSVERPIASGRVSPRRALVFLGAQTLVGMGVLSLLPAQCWWLGLASLPIVFTYPLFKRFTYYPQAALSACFNWGALLGFPAMGVMSWPTMIPLYLSSYLWCMTYDTIYAHQDKKFDIKAGIKSTALAWGPRTKSIMKAMSASQIALLAVAGLNSGLLWGPGFIGGLGVFAYRLFSMIKKVDLDNPKNCWKYFNANINTGLYFTYALAVDYILRLFGFL.

The transit peptide at 1-42 (MFIWQRKSILLGRSILGSGRVTVAGIIGSSRKRYTSSSSSSS) directs the protein to the mitochondrion. 7 consecutive transmembrane segments (helical) span residues 92–112 (PVGT…GAMM), 114–134 (GATL…ALVM), 171–191 (ALVF…LLPA), 193–213 (CWWL…FKRF), 229–249 (ALLG…PLYL), 298–318 (IALL…GFIG), and 352–372 (TGLY…FGFL).

This sequence belongs to the UbiA prenyltransferase family. Requires Mg(2+) as cofactor.

The protein resides in the mitochondrion inner membrane. It carries out the reaction an all-trans-polyprenyl diphosphate + 4-hydroxybenzoate = a 4-hydroxy-3-(all-trans-polyprenyl)benzoate + diphosphate. It functions in the pathway cofactor biosynthesis; ubiquinone biosynthesis. Catalyzes the prenylation of para-hydroxybenzoate (PHB) with an all-trans polyprenyl group. Mediates the second step in the final reaction sequence of coenzyme Q (CoQ) biosynthesis, which is the condensation of the polyisoprenoid side chain with PHB, generating the first membrane-bound Q intermediate. In Saccharomyces cerevisiae (strain ATCC 204508 / S288c) (Baker's yeast), this protein is 4-hydroxybenzoate polyprenyltransferase, mitochondrial.